A 348-amino-acid polypeptide reads, in one-letter code: Noscapine synthase SDR1 (348 aa).

It belongs to the NAD(P)-dependent epimerase/dehydratase family.

The enzyme catalyses narcotine hemiacetal + NAD(+) = noscapine + NADH + H(+). Its pathway is alkaloid biosynthesis. Its function is as follows. Oxidoreductase that catalyzes the last step in the biosynthesis of the benzylisoquinoline alkaloid noscapine. Converts narcotine hemiacetal to noscapine. The protein is Noscapine synthase SDR1 of Papaver somniferum (Opium poppy).